Consider the following 406-residue polypeptide: MSDIYEIGEALIGDGPELAHIDLIVGSKQGPVGTAFATNMASMSVGHTPLLSVIRPNLPTKPATLIVPKVTVQNLDDASKIFGPAQTAVGRAVADAVEEEIIPKDIVEDIVLMVNVFIDPSAKDYRKIYQYNYGATKLAIKRAFDKYPSVDKVLAEKDRGTHPIMGFKAMKLWNPPYLQVALDLDNEDRMRSIIRDLPKRERILIEAGTPLVKKFGVEIISKIREERPGAFIIADLKTLDVGRVEVKMAADETADAVAISGLGTNESIEKAIHECSKQGIYSILDMMNVSDIPSKLEELKLKPNIVLLHRNIDSETMRDNDGEQQSEWGNIKDIKSKLGKRGLIAVAGGVTPEKVDTALANGANIIIAGRYIIGSSDVRRAAEDFLRYLPQDSDTMRLALDEDEKI.

The segment at 1 to 164 (MSDIYEIGEA…AEKDRGTHPI (164 aa)) is formaldehyde-activating enzyme. H20 (proton donor) is an active-site residue. Positions 22, 51, 69, 71, and 86 each coordinate substrate. Residues 165-406 (MGFKAMKLWN…RLALDEDEKI (242 aa)) form a 3-hexulose-6-phosphate synthase region.

It in the N-terminal section; belongs to the formaldehyde-activating enzyme family. The protein in the C-terminal section; belongs to the HPS/KGPDC family. HPS subfamily.

It carries out the reaction 5,6,7,8-tetrahydromethanopterin + formaldehyde = 5,10-methylenetetrahydromethanopterin + H2O. It catalyses the reaction D-ribulose 5-phosphate + formaldehyde = D-arabino-hex-3-ulose 6-phosphate. It participates in carbohydrate biosynthesis; D-ribose 5-phosphate biosynthesis. In terms of biological role, catalyzes the condensation of formaldehyde with tetrahydromethanopterin (H(4)MPT) to 5,10-methylenetetrahydromethanopterin. Its function is as follows. Catalyzes the reversible formation of ribulose-5-phosphate and formaldehyde from 3-hexulose-6-phosphate. The polypeptide is Bifunctional enzyme Fae/Hps (Methanosphaera stadtmanae (strain ATCC 43021 / DSM 3091 / JCM 11832 / MCB-3)).